The sequence spans 211 residues: Urease accessory protein UreF (211 aa).

The segment at 71–93 (DDADRETDARTPAPAARHASRSQ) is disordered.

The protein belongs to the UreF family. As to quaternary structure, ureD, UreF and UreG form a complex that acts as a GTP-hydrolysis-dependent molecular chaperone, activating the urease apoprotein by helping to assemble the nickel containing metallocenter of UreC. The UreE protein probably delivers the nickel.

It is found in the cytoplasm. Its function is as follows. Required for maturation of urease via the functional incorporation of the urease nickel metallocenter. This is Urease accessory protein UreF from Mycobacterium bovis (strain ATCC BAA-935 / AF2122/97).